Consider the following 788-residue polypeptide: Endonuclease MutS2 (788 aa).

Position 332-339 (332-339 (GPNTGGKT)) interacts with ATP. A Smr domain is found at 713–788 (VDLRGMDAEE…GTGVTVVELK (76 aa)).

It belongs to the DNA mismatch repair MutS family. MutS2 subfamily. In terms of assembly, homodimer. Binds to stalled ribosomes, contacting rRNA.

Its function is as follows. Endonuclease that is involved in the suppression of homologous recombination and thus may have a key role in the control of bacterial genetic diversity. Acts as a ribosome collision sensor, splitting the ribosome into its 2 subunits. Detects stalled/collided 70S ribosomes which it binds and splits by an ATP-hydrolysis driven conformational change. Acts upstream of the ribosome quality control system (RQC), a ribosome-associated complex that mediates the extraction of incompletely synthesized nascent chains from stalled ribosomes and their subsequent degradation. Probably generates substrates for RQC. This chain is Endonuclease MutS2, found in Clostridium botulinum (strain Kyoto / Type A2).